The sequence spans 967 residues: Isoleucine--tRNA ligase 2 (967 aa).

A 'HIGH' region motif is present at residues 58-68 (PYANGDIHIGH). Low complexity predominate over residues 437 to 446 (AVTEEAGATG). The disordered stretch occupies residues 437–466 (AVTEEAGATGEARKVGKAEEAEEAGPAKTL). An L-isoleucyl-5'-AMP-binding site is contributed by Glu598. Positions 639–643 (KMSKS) match the 'KMSKS' region motif. Lys642 provides a ligand contact to ATP. Zn(2+) is bound by residues Cys922, Cys925, Cys942, and Cys945.

This sequence belongs to the class-I aminoacyl-tRNA synthetase family. IleS type 1 subfamily. In terms of assembly, monomer. It depends on Zn(2+) as a cofactor.

The protein localises to the cytoplasm. The enzyme catalyses tRNA(Ile) + L-isoleucine + ATP = L-isoleucyl-tRNA(Ile) + AMP + diphosphate. In terms of biological role, catalyzes the attachment of isoleucine to tRNA(Ile). As IleRS can inadvertently accommodate and process structurally similar amino acids such as valine, to avoid such errors it has two additional distinct tRNA(Ile)-dependent editing activities. One activity is designated as 'pretransfer' editing and involves the hydrolysis of activated Val-AMP. The other activity is designated 'posttransfer' editing and involves deacylation of mischarged Val-tRNA(Ile). This Burkholderia mallei (strain ATCC 23344) protein is Isoleucine--tRNA ligase 2.